The primary structure comprises 203 residues: 3-isopropylmalate dehydratase small subunit (203 aa).

It belongs to the LeuD family. LeuD type 1 subfamily. In terms of assembly, heterodimer of LeuC and LeuD.

It catalyses the reaction (2R,3S)-3-isopropylmalate = (2S)-2-isopropylmalate. Its pathway is amino-acid biosynthesis; L-leucine biosynthesis; L-leucine from 3-methyl-2-oxobutanoate: step 2/4. Functionally, catalyzes the isomerization between 2-isopropylmalate and 3-isopropylmalate, via the formation of 2-isopropylmaleate. The polypeptide is 3-isopropylmalate dehydratase small subunit (Rhodospirillum centenum (strain ATCC 51521 / SW)).